The chain runs to 88 residues: Small ribosomal subunit protein uS15 (88 aa).

Belongs to the universal ribosomal protein uS15 family. Part of the 30S ribosomal subunit. Forms a bridge to the 50S subunit in the 70S ribosome, contacting the 23S rRNA.

Its function is as follows. One of the primary rRNA binding proteins, it binds directly to 16S rRNA where it helps nucleate assembly of the platform of the 30S subunit by binding and bridging several RNA helices of the 16S rRNA. In terms of biological role, forms an intersubunit bridge (bridge B4) with the 23S rRNA of the 50S subunit in the ribosome. This is Small ribosomal subunit protein uS15 from Paracidovorax citrulli (strain AAC00-1) (Acidovorax citrulli).